Reading from the N-terminus, the 444-residue chain is uncharacterized protein (444 aa).

Helical transmembrane passes span 2 to 22 (PILI…KVKL), 24 to 44 (TFVS…MDIN), 52 to 72 (TGIG…AMLG), 106 to 126 (FIIG…PIVY), 134 to 154 (MPFL…HGFL), 174 to 194 (VLLF…PLFN), 228 to 248 (FAIS…ATIF), 261 to 281 (IIEF…LALY), 305 to 325 (IAMM…LIDG), 343 to 363 (LFVA…ATVA), 377 to 397 (AGSV…VIAC), and 424 to 444 (LLTT…GLVM).

Belongs to the GntP permease family.

It localises to the cell membrane. This is an uncharacterized protein from Bacillus subtilis (strain 168).